Here is a 130-residue protein sequence, read N- to C-terminus: Large ribosomal subunit protein bL12 (130 aa).

It belongs to the bacterial ribosomal protein bL12 family. Homodimer. Part of the ribosomal stalk of the 50S ribosomal subunit. Forms a multimeric L10(L12)X complex, where L10 forms an elongated spine to which 2 to 4 L12 dimers bind in a sequential fashion. Binds GTP-bound translation factors.

In terms of biological role, forms part of the ribosomal stalk which helps the ribosome interact with GTP-bound translation factors. Is thus essential for accurate translation. The polypeptide is Large ribosomal subunit protein bL12 (Parafrankia sp. (strain EAN1pec)).